Here is a 345-residue protein sequence, read N- to C-terminus: S-adenosylmethionine:tRNA ribosyltransferase-isomerase (345 aa).

The protein belongs to the QueA family. Monomer.

Its subcellular location is the cytoplasm. It catalyses the reaction 7-aminomethyl-7-carbaguanosine(34) in tRNA + S-adenosyl-L-methionine = epoxyqueuosine(34) in tRNA + adenine + L-methionine + 2 H(+). It participates in tRNA modification; tRNA-queuosine biosynthesis. Its function is as follows. Transfers and isomerizes the ribose moiety from AdoMet to the 7-aminomethyl group of 7-deazaguanine (preQ1-tRNA) to give epoxyqueuosine (oQ-tRNA). The chain is S-adenosylmethionine:tRNA ribosyltransferase-isomerase from Shewanella halifaxensis (strain HAW-EB4).